The sequence spans 107 residues: Thioredoxin (107 aa).

The 106-residue stretch at Ser-2 to Leu-107 folds into the Thioredoxin domain. An intrachain disulfide couples Cys-32 to Cys-35.

Belongs to the thioredoxin family.

Its function is as follows. Component of the thioredoxin-thioredoxin reductase system. Participates in various redox reactions through the reversible oxidation of its active center dithiol to a disulfide and catalyzes dithiol-disulfide exchange reactions. This chain is Thioredoxin (trxA), found in Synechocystis sp. (strain ATCC 27184 / PCC 6803 / Kazusa).